The following is a 785-amino-acid chain: DNA ligase (785 aa).

Residues 32-36, 81-82, and E121 contribute to the NAD(+) site; these read DAEYD and SL. The N6-AMP-lysine intermediate role is filled by K123. Residues R144, E181, K297, and K321 each contribute to the NAD(+) site. The Zn(2+) site is built by C415, C418, C445, and C451. The 84-residue stretch at 702–785 folds into the BRCT domain; it reads VEGLPLAGET…AFLKGHGISA (84 aa).

It belongs to the NAD-dependent DNA ligase family. LigA subfamily. Requires Mg(2+) as cofactor. The cofactor is Mn(2+).

The catalysed reaction is NAD(+) + (deoxyribonucleotide)n-3'-hydroxyl + 5'-phospho-(deoxyribonucleotide)m = (deoxyribonucleotide)n+m + AMP + beta-nicotinamide D-nucleotide.. Functionally, DNA ligase that catalyzes the formation of phosphodiester linkages between 5'-phosphoryl and 3'-hydroxyl groups in double-stranded DNA using NAD as a coenzyme and as the energy source for the reaction. It is essential for DNA replication and repair of damaged DNA. The polypeptide is DNA ligase (Pseudomonas fluorescens (strain Pf0-1)).